The following is a 715-amino-acid chain: Probable serine/threonine-protein kinase mkcE (715 aa).

Disordered stretches follow at residues 1-125 (MQKI…SQHQ), 228-330 (QLQQ…TTTT), and 366-385 (GVDN…PIQP). Over residues 42 to 53 (YDGGGSGSGSGG) the composition is skewed to gly residues. Low complexity-rich tracts occupy residues 54-70 (SSSN…TGGN) and 80-125 (SPSN…SQHQ). A coiled-coil region spans residues 207–241 (TGKKNFQQQQLQQLQQQQQQQQLQQQQHQQHNHQI). Over residues 367–378 (VDNLSSTTTSLS) the composition is skewed to low complexity. The Protein kinase domain maps to 427–683 (RIGENAEVKG…PTQLLQHPFI (257 aa)). ATP contacts are provided by residues 433-441 (EVKGAFGTV) and Lys459. The Proton acceptor role is filled by Asp550.

Belongs to the protein kinase superfamily. STE Ser/Thr protein kinase family. STE20 subfamily. The cofactor is Mg(2+).

The catalysed reaction is L-seryl-[protein] + ATP = O-phospho-L-seryl-[protein] + ADP + H(+). It carries out the reaction L-threonyl-[protein] + ATP = O-phospho-L-threonyl-[protein] + ADP + H(+). The chain is Probable serine/threonine-protein kinase mkcE from Dictyostelium discoideum (Social amoeba).